The following is a 281-amino-acid chain: MKATTFTLLLSIATAINAAAFEDSRLKALFARDAEISFGATLSAEISHGFGHHHGHTADLSSEIGGGSSSSSVSESTVEELSTTTTTESVSASVSASVSASVSASVSVSSSAEETSTEATESAETTDSFETTDSAETTDIVETTDSVDTNTTDISTTDETTEETTDATDSVETTFESVSNTEDLSSSSSSIITDSSESTIEETPLITDTSVPSSLSEEYSTSGSSSEWIHTTTAATSHNSSNSNSNHSNVSNTTTSANFAIQYGTDYGVAVVAAIVGALLI.

Residues 1–18 (MKATTFTLLLSIATAINA) form the signal peptide. Disordered regions lie at residues 52-94 (HHHG…SASV) and 106-227 (VSVS…SSSE). Composition is skewed to low complexity over residues 69 to 94 (SSSSVSESTVEELSTTTTTESVSASV), 106 to 158 (VSVS…STTD), 167 to 203 (ATDSVETTFESVSNTEDLSSSSSSIITDSSESTIEET), and 210 to 227 (SVPSSLSEEYSTSGSSSE). Residue Asn150 is glycosylated (N-linked (GlcNAc...) asparagine). N-linked (GlcNAc...) asparagine glycosylation is found at Asn239, Asn246, Asn249, and Asn252. The GPI-anchor amidated serine moiety is linked to residue Ser256. A propeptide spans 257 to 281 (ANFAIQYGTDYGVAVVAAIVGALLI) (removed in mature form).

The protein localises to the cell membrane. This chain is Predicted GPI-anchored protein 39 (PGA39), found in Candida albicans (strain SC5314 / ATCC MYA-2876) (Yeast).